Reading from the N-terminus, the 375-residue chain is Protein RecA (375 aa).

75 to 82 lines the ATP pocket; it reads GPESSGKT. Residues 339–375 form a disordered region; that stretch reads GPYAKMKDEQTEEAAGDQMDEDKPIDLSPNFDDDDAN. A compositionally biased stretch (acidic residues) spans 348 to 358; it reads QTEEAAGDQMD.

The protein belongs to the RecA family.

It is found in the cytoplasm. Can catalyze the hydrolysis of ATP in the presence of single-stranded DNA, the ATP-dependent uptake of single-stranded DNA by duplex DNA, and the ATP-dependent hybridization of homologous single-stranded DNAs. It interacts with LexA causing its activation and leading to its autocatalytic cleavage. This is Protein RecA from Corynebacterium jeikeium (strain K411).